A 39-amino-acid chain; its full sequence is Photosystem II reaction center protein L (39 aa).

The helical transmembrane segment at 18-38 (SLYLGLLSVFVLGILFSSYFF) threads the bilayer.

This sequence belongs to the PsbL family. As to quaternary structure, PSII is composed of 1 copy each of membrane proteins PsbA, PsbB, PsbC, PsbD, PsbE, PsbF, PsbH, PsbI, PsbJ, PsbK, PsbL, PsbM, PsbT, PsbX, PsbY, Psb30/Ycf12, peripheral proteins PsbO, CyanoQ (PsbQ), PsbU, PsbV and a large number of cofactors. It forms dimeric complexes.

It localises to the cellular thylakoid membrane. Functionally, one of the components of the core complex of photosystem II (PSII). PSII is a light-driven water:plastoquinone oxidoreductase that uses light energy to abstract electrons from H(2)O, generating O(2) and a proton gradient subsequently used for ATP formation. It consists of a core antenna complex that captures photons, and an electron transfer chain that converts photonic excitation into a charge separation. This subunit is found at the monomer-monomer interface and is required for correct PSII assembly and/or dimerization. This Prochlorococcus marinus (strain MIT 9301) protein is Photosystem II reaction center protein L.